The primary structure comprises 378 residues: Cytochrome b (378 aa).

Helical transmembrane passes span 34 to 54 (FGSLLGLCLMLQILTGLFLAM), 78 to 99 (WFLRICHANGASFFFACLFMHV), 114 to 134 (WNTGVIILFLTMATGFLGYVL), and 179 to 199 (FFTFHFIFPFIILALMMIHLL). 2 residues coordinate heme b: histidine 84 and histidine 98. The heme b site is built by histidine 183 and histidine 197. Histidine 202 is a binding site for a ubiquinone. The next 4 membrane-spanning stretches (helical) occupy residues 227–247 (YKDIFGFIVFYWILIRFIWKF), 289–309 (LGGVIALVLSIAILLILPFTH), 321–341 (LNQILFWNMVVVASLLTWIGA), and 348–368 (YVLTGQILTVLYFSYFIINPL).

It belongs to the cytochrome b family. The main subunits of complex b-c1 are: cytochrome b, cytochrome c1 and the Rieske protein. Heme b serves as cofactor.

It localises to the mitochondrion inner membrane. Component of the ubiquinol-cytochrome c reductase complex (complex III or cytochrome b-c1 complex) that is part of the mitochondrial respiratory chain. The b-c1 complex mediates electron transfer from ubiquinol to cytochrome c. Contributes to the generation of a proton gradient across the mitochondrial membrane that is then used for ATP synthesis. In Anopheles quadrimaculatus (Common malaria mosquito), this protein is Cytochrome b (MT-CYB).